A 493-amino-acid chain; its full sequence is MSSKVEYKPIQPHEEAENHFLQHELHKVKARKYYRCALVVAIIITLVFCILASQLLLFPFLSITSQTTETVLNKDIRCDDQCRFVLVESIPEGLVYDANSTINPSIFQSWMNIITNAKSSIDIASFYWSLTNEDTQTKEPSAHQGELILQELLNLKQRGVSLRVAVNPPDSPIRSKDISALKDRGADVRVVDMPKLTDGILHTKFWVVDNEHFYIGSANMDWRSLTQVKELGATIYNCSCLAQDLKKIFEAYWILGLPNATLPSPWPANYSTPYNKDTPMQVMLNSTASQVYLSSSPPPLSATGRTDDLQSIMNIIDDAKKFVYISVMDYSPTEEFSHPRRYWPEIDNHLRKAVYERNVNVRLLISCWKNSRPSMFTFLRSLAALHSNTSHYNIEVKIFVVPATEAQKKIPYARVNHNKYMVTDRVAYIGTSNWSGDYFINTAGSALVVNQTQSAGTSDTIQMQLQTVFERDWNSNYSLTFNTLSSWKEKCIF.

The Cytoplasmic segment spans residues 1 to 37; that stretch reads MSSKVEYKPIQPHEEAENHFLQHELHKVKARKYYRCA. The helical; Signal-anchor for type II membrane protein transmembrane segment at 38–58 threads the bilayer; that stretch reads LVVAIIITLVFCILASQLLLF. Residues 59-493 lie on the Lumenal side of the membrane; it reads PFLSITSQTT…LSSWKEKCIF (435 aa). N-linked (GlcNAc...) asparagine glycosylation occurs at Asn99. The PLD phosphodiesterase 1 domain occupies 197 to 224; sequence TDGILHTKFWVVDNEHFYIGSANMDWRS. Residues His202, Lys204, and Asp209 contribute to the active site. Asn237, Asn259, Asn269, Asn285, and Asn388 each carry an N-linked (GlcNAc...) asparagine glycan. Positions 412–438 constitute a PLD phosphodiesterase 2 domain; the sequence is YARVNHNKYMVTDRVAYIGTSNWSGDY. Catalysis depends on residues His417, Lys419, and Asp424. N-linked (GlcNAc...) asparagine glycans are attached at residues Asn433, Asn450, and Asn476.

Belongs to the phospholipase D family. Post-translationally, N-glycosylated. In terms of processing, proteolytically processed to a soluble form that is stable within endosomes and lysosomes. During transport through the secretory pathway becomes proteolysed by cysteine proteases, thereby releasing a stable soluble lysosomal lumenal polypeptide, whereas the transmembrane-bound fragment is rapidly degraded. Its transport route to lysosomes involves ubiquitination and the ESCRT complex. Ubiquitinated. Ubiquitination mediates sorting into lysosomes.

The protein localises to the endoplasmic reticulum membrane. Its subcellular location is the lysosome lumen. It localises to the early endosome membrane. The protein resides in the late endosome membrane. It is found in the golgi apparatus membrane. The protein localises to the endosome membrane. It carries out the reaction Exonucleolytic cleavage in the 5'- to 3'-direction to yield nucleoside 3'-phosphates.. 5'-&gt;3' DNA exonuclease which digests single-stranded DNA (ssDNA). Regulates inflammatory cytokine responses via the degradation of nucleic acids, by reducing the concentration of ssDNA able to stimulate TLR9, a nucleotide-sensing receptor in collaboration with PLD4. May be important in myotube formation. Plays a role in lysosomal homeostasis. Involved in the regulation of endosomal protein sorting. The sequence is that of 5'-3' exonuclease PLD3 (pld3) from Xenopus laevis (African clawed frog).